The primary structure comprises 116 residues: ATP-dependent Clp protease adapter protein ClpS (116 aa).

The segment covering methionine 1–lysine 11 has biased composition (polar residues). Positions methionine 1–valine 23 are disordered.

The protein belongs to the ClpS family. As to quaternary structure, binds to the N-terminal domain of the chaperone ClpA.

In terms of biological role, involved in the modulation of the specificity of the ClpAP-mediated ATP-dependent protein degradation. The sequence is that of ATP-dependent Clp protease adapter protein ClpS from Brucella melitensis biotype 2 (strain ATCC 23457).